Here is a 188-residue protein sequence, read N- to C-terminus: UPF0301 protein XCV3063 (188 aa).

This sequence belongs to the UPF0301 (AlgH) family.

This chain is UPF0301 protein XCV3063, found in Xanthomonas euvesicatoria pv. vesicatoria (strain 85-10) (Xanthomonas campestris pv. vesicatoria).